Here is a 166-residue protein sequence, read N- to C-terminus: Lipoprotein signal peptidase (166 aa).

The next 4 helical transmembrane spans lie at 9-29 (ASGA…FDQL), 45-65 (ALTS…FGFL), 71-91 (WQRW…CYLL), and 99-119 (LFSL…IDRL). Catalysis depends on residues aspartate 126 and aspartate 144. Residues 135-155 (WHFPAFNLADSAITVGAVLLI) traverse the membrane as a helical segment.

It belongs to the peptidase A8 family.

The protein resides in the cell inner membrane. It carries out the reaction Release of signal peptides from bacterial membrane prolipoproteins. Hydrolyzes -Xaa-Yaa-Zaa-|-(S,diacylglyceryl)Cys-, in which Xaa is hydrophobic (preferably Leu), and Yaa (Ala or Ser) and Zaa (Gly or Ala) have small, neutral side chains.. Its pathway is protein modification; lipoprotein biosynthesis (signal peptide cleavage). This protein specifically catalyzes the removal of signal peptides from prolipoproteins. This chain is Lipoprotein signal peptidase, found in Burkholderia vietnamiensis (strain G4 / LMG 22486) (Burkholderia cepacia (strain R1808)).